We begin with the raw amino-acid sequence, 112 residues long: T cell receptor alpha variable 9-2 (112 aa).

Positions Met1 to Gly20 are cleaved as a signal peptide. Positions Asp21 to Ser112 constitute an Ig-like domain. N-linked (GlcNAc...) asparagine glycosylation is present at Asn41. Cys42 and Cys109 are oxidised to a cystine.

Alpha-beta TR is a heterodimer composed of an alpha and beta chain; disulfide-linked. The alpha-beta TR is associated with the transmembrane signaling CD3 coreceptor proteins to form the TR-CD3 (TcR or TCR). The assembly of alpha-beta TR heterodimers with CD3 occurs in the endoplasmic reticulum where a single alpha-beta TR heterodimer associates with one CD3D-CD3E heterodimer, one CD3G-CD3E heterodimer and one CD247 homodimer forming a stable octameric structure. CD3D-CD3E and CD3G-CD3E heterodimers preferentially associate with TR alpha and TR beta chains, respectively. The association of the CD247 homodimer is the last step of TcR assembly in the endoplasmic reticulum and is required for transport to the cell surface.

The protein localises to the cell membrane. V region of the variable domain of T cell receptor (TR) alpha chain that participates in the antigen recognition. Alpha-beta T cell receptors are antigen specific receptors which are essential to the immune response and are present on the cell surface of T lymphocytes. Recognize peptide-major histocompatibility (MH) (pMH) complexes that are displayed by antigen presenting cells (APC), a prerequisite for efficient T cell adaptive immunity against pathogens. Binding of alpha-beta TR to pMH complex initiates TR-CD3 clustering on the cell surface and intracellular activation of LCK that phosphorylates the ITAM motifs of CD3G, CD3D, CD3E and CD247 enabling the recruitment of ZAP70. In turn ZAP70 phosphorylates LAT, which recruits numerous signaling molecules to form the LAT signalosome. The LAT signalosome propagates signal branching to three major signaling pathways, the calcium, the mitogen-activated protein kinase (MAPK) kinase and the nuclear factor NF-kappa-B (NF-kB) pathways, leading to the mobilization of transcription factors that are critical for gene expression and essential for T cell growth and differentiation. The T cell repertoire is generated in the thymus, by V-(D)-J rearrangement. This repertoire is then shaped by intrathymic selection events to generate a peripheral T cell pool of self-MH restricted, non-autoaggressive T cells. Post-thymic interaction of alpha-beta TR with the pMH complexes shapes TR structural and functional avidity. This Homo sapiens (Human) protein is T cell receptor alpha variable 9-2.